A 149-amino-acid chain; its full sequence is Protein K7 (149 aa).

This sequence belongs to the orthopoxvirus OPG044 family. In terms of assembly, interacts with DDX3; this interaction inhibits DDX3 and suppresses DDX3-mediated IFN-beta promoter induction. Interacts with TRAF6 and IRAK2; these interactions suppress TLR-dependent NF-KappaB activation.

The protein localises to the host cytoplasm. Functionally, virulence factor that affects the acute immune response to infection. Bcl-2-like protein which, through its interaction with the DEAD box RNA helicase DDX3X/DDX3, prevents TBK1/IKKepsilon-mediated IRF3 activation. Contributes to virulence by binding to the host TRAF6 and IRAK2 and preventing host NF-kappa-B activation. The chain is Protein K7 (OPG044) from Homo sapiens (Human).